The chain runs to 244 residues: Phosphoadenosine 5'-phosphosulfate reductase (244 aa).

The active-site Nucleophile; cysteine thiosulfonate intermediate is the cysteine 239.

Belongs to the PAPS reductase family. CysH subfamily.

The protein localises to the cytoplasm. It catalyses the reaction [thioredoxin]-disulfide + sulfite + adenosine 3',5'-bisphosphate + 2 H(+) = [thioredoxin]-dithiol + 3'-phosphoadenylyl sulfate. Its pathway is sulfur metabolism; hydrogen sulfide biosynthesis; sulfite from sulfate: step 3/3. Its function is as follows. Catalyzes the formation of sulfite from phosphoadenosine 5'-phosphosulfate (PAPS) using thioredoxin as an electron donor. This chain is Phosphoadenosine 5'-phosphosulfate reductase, found in Shigella boydii serotype 4 (strain Sb227).